Consider the following 89-residue polypeptide: uncharacterized protein (89 aa).

This is an uncharacterized protein from Archaeoglobus fulgidus (strain ATCC 49558 / DSM 4304 / JCM 9628 / NBRC 100126 / VC-16).